A 381-amino-acid chain; its full sequence is Creatine kinase M-type (381 aa).

The region spanning 11–98 is the Phosphagen kinase N-terminal domain; sequence KLNYKPEEEY…FDPIIQDRHG (88 aa). Residues 125 to 367 enclose the Phosphagen kinase C-terminal domain; it reads YVLSSRVRTG…KLMVEMEKKL (243 aa). 128 to 132 is an ATP binding site; sequence SSRVR. Ser-164 carries the phosphoserine modification. Thr-166 bears the Phosphothreonine mark. A Phosphoserine modification is found at Ser-178. Position 180 is a phosphothreonine (Thr-180). His-191 is an ATP binding site. A Phosphoserine modification is found at Ser-199. 2 residues coordinate ATP: Arg-236 and Arg-292. 2 positions are modified to phosphothreonine: Thr-313 and Thr-322. ATP is bound by residues 320–325 and Asp-335; that span reads RGTGGV. Ser-372 is subject to Phosphoserine.

The protein belongs to the ATP:guanido phosphotransferase family. Dimer of identical or non-identical chains, which can be either B (brain type) or M (muscle type). With MM being the major form in skeletal muscle and myocardium, MB existing in myocardium, and BB existing in many tissues, especially brain.

The protein resides in the cytoplasm. It carries out the reaction creatine + ATP = N-phosphocreatine + ADP + H(+). In terms of biological role, reversibly catalyzes the transfer of phosphate between ATP and various phosphogens (e.g. creatine phosphate). Creatine kinase isoenzymes play a central role in energy transduction in tissues with large, fluctuating energy demands, such as skeletal muscle, heart, brain and spermatozoa. The chain is Creatine kinase M-type (CKM) from Canis lupus familiaris (Dog).